The sequence spans 253 residues: MSLVCSVIFIHHAFNANILDKDYAFSDGEILMVDNAVRTHFEPYERHFKEIGFTENTIKKYLQCTNIQTVTVPVPAKFLRASNVPTGLLNEMIAYLNSEERNHHNFSELLLFSCLSIFAACKGFITLLTNGVLSVSGKVRNIVNMKPAHPWKLKDICDCLYISESLLKKKLKQEQTTFSQILLDARMQHAKNLIRVEGSVNKIAEQCGYASTSYFIYAFRKHFGNSPKRVSKEYRCQSHTGMNTGNTMNALAI.

The HTH araC/xylS-type domain occupies Gly137 to Glu233. 2 DNA-binding regions (H-T-H motif) span residues Lys154–Gln175 and Val200–Phe223.

In terms of biological role, induces the expression of gadE and mdtEF. Could also regulate the expression of other genes involved in acid resistance. The polypeptide is HTH-type transcriptional regulator YdeO (ydeO) (Escherichia coli (strain K12)).